A 396-amino-acid polypeptide reads, in one-letter code: Phosphoglycerate kinase (396 aa).

Substrate is bound by residues 24 to 26, arginine 39, 62 to 65, arginine 120, and arginine 153; these read DFN and HLGR. Residues lysine 203, glycine 294, glutamate 325, and 352 to 355 contribute to the ATP site; that span reads GGDS.

The protein belongs to the phosphoglycerate kinase family. As to quaternary structure, monomer.

Its subcellular location is the cytoplasm. It catalyses the reaction (2R)-3-phosphoglycerate + ATP = (2R)-3-phospho-glyceroyl phosphate + ADP. It functions in the pathway carbohydrate degradation; glycolysis; pyruvate from D-glyceraldehyde 3-phosphate: step 2/5. This chain is Phosphoglycerate kinase, found in Dictyoglomus turgidum (strain DSM 6724 / Z-1310).